The sequence spans 141 residues: Nucleoside diphosphate kinase (141 aa).

6 residues coordinate ATP: Lys-11, Phe-59, Arg-87, Thr-93, Arg-104, and Asn-114. His-117 functions as the Pros-phosphohistidine intermediate in the catalytic mechanism.

This sequence belongs to the NDK family. As to quaternary structure, homotetramer. Requires Mg(2+) as cofactor.

The protein resides in the cytoplasm. It carries out the reaction a 2'-deoxyribonucleoside 5'-diphosphate + ATP = a 2'-deoxyribonucleoside 5'-triphosphate + ADP. It catalyses the reaction a ribonucleoside 5'-diphosphate + ATP = a ribonucleoside 5'-triphosphate + ADP. In terms of biological role, major role in the synthesis of nucleoside triphosphates other than ATP. The ATP gamma phosphate is transferred to the NDP beta phosphate via a ping-pong mechanism, using a phosphorylated active-site intermediate. This chain is Nucleoside diphosphate kinase, found in Laribacter hongkongensis (strain HLHK9).